We begin with the raw amino-acid sequence, 207 residues long: Large ribosomal subunit protein uL4 (207 aa).

Residues 49 to 78 form a disordered region; that stretch reads HAVKNRSAVRGGGRKPWRQKGTGRARQGSI. The span at 60–71 shows a compositional bias: basic residues; that stretch reads GGRKPWRQKGTG.

This sequence belongs to the universal ribosomal protein uL4 family. As to quaternary structure, part of the 50S ribosomal subunit.

Functionally, one of the primary rRNA binding proteins, this protein initially binds near the 5'-end of the 23S rRNA. It is important during the early stages of 50S assembly. It makes multiple contacts with different domains of the 23S rRNA in the assembled 50S subunit and ribosome. Its function is as follows. Forms part of the polypeptide exit tunnel. This is Large ribosomal subunit protein uL4 from Enterococcus faecalis (strain ATCC 700802 / V583).